Reading from the N-terminus, the 243-residue chain is UPF0502 protein RALTA_B0914 (243 aa).

Positions 1–10 (MPSTPESDPT) are enriched in polar residues. Residues 1–23 (MPSTPESDPTQPGDRPARPALRP) form a disordered region.

It belongs to the UPF0502 family.

This chain is UPF0502 protein RALTA_B0914, found in Cupriavidus taiwanensis (strain DSM 17343 / BCRC 17206 / CCUG 44338 / CIP 107171 / LMG 19424 / R1) (Ralstonia taiwanensis (strain LMG 19424)).